The following is a 131-amino-acid chain: Small ribosomal subunit protein uS8 (131 aa).

Belongs to the universal ribosomal protein uS8 family. As to quaternary structure, part of the 30S ribosomal subunit. Contacts proteins S5 and S12.

Functionally, one of the primary rRNA binding proteins, it binds directly to 16S rRNA central domain where it helps coordinate assembly of the platform of the 30S subunit. In Paraburkholderia phymatum (strain DSM 17167 / CIP 108236 / LMG 21445 / STM815) (Burkholderia phymatum), this protein is Small ribosomal subunit protein uS8.